The sequence spans 89 residues: Cell division topological specificity factor (89 aa).

Belongs to the MinE family.

Its function is as follows. Prevents the cell division inhibition by proteins MinC and MinD at internal division sites while permitting inhibition at polar sites. This ensures cell division at the proper site by restricting the formation of a division septum at the midpoint of the long axis of the cell. The polypeptide is Cell division topological specificity factor (Clostridium beijerinckii (strain ATCC 51743 / NCIMB 8052) (Clostridium acetobutylicum)).